The sequence spans 391 residues: Elongation factor Tu 1 (391 aa).

The 192-residue stretch at 10–201 (KLHVNIGTIG…EVDRYIPTPE (192 aa)) folds into the tr-type G domain. The interval 19 to 26 (GHVDHGKT) is G1. 19–26 (GHVDHGKT) is a GTP binding site. Position 26 (Thr26) interacts with Mg(2+). The interval 55–59 (GITIS) is G2. Residues 76–79 (DCPG) form a G3 region. GTP is bound by residues 76–80 (DCPGH) and 131–134 (NKVD). Positions 131-134 (NKVD) are G4. The tract at residues 169–171 (SAL) is G5.

This sequence belongs to the TRAFAC class translation factor GTPase superfamily. Classic translation factor GTPase family. EF-Tu/EF-1A subfamily. Monomer.

It is found in the cytoplasm. The catalysed reaction is GTP + H2O = GDP + phosphate + H(+). Functionally, GTP hydrolase that promotes the GTP-dependent binding of aminoacyl-tRNA to the A-site of ribosomes during protein biosynthesis. This chain is Elongation factor Tu 1, found in Bartonella bacilliformis (strain ATCC 35685 / KC583 / Herrer 020/F12,63).